Reading from the N-terminus, the 1025-residue chain is Synapsin (1025 aa).

Disordered regions lie at residues Met1 to Ser94, Val439 to Ser784, Tyr872 to Asp910, and Asp995 to Lys1025. Residues Thr34–Gly52 are compositionally biased toward pro residues. A compositionally biased stretch (low complexity) spans Ser454–Glu463. Positions Pro472 to Pro492 are enriched in pro residues. Composition is skewed to low complexity over residues Val499–Ser546 and Ser594–Phe626. Ser539 is modified (phosphoserine). Polar residues predominate over residues Thr651–Thr673. A compositionally biased stretch (basic and acidic residues) spans Gln690–Ser702. Over residues Lys703–Ser725 the composition is skewed to low complexity. Polar residues predominate over residues Arg726–Gln735. Pro residues predominate over residues Ser736–Thr749. The span at Asn750–Asn759 shows a compositional bias: polar residues. Low complexity predominate over residues Ser760–Leu772. Positions Tyr872–Asn904 are enriched in polar residues. The span at Asp995–Ser1007 shows a compositional bias: low complexity.

Belongs to the synapsin family. Identified in a complex with Syt1 and nwk. As to expression, widely expressed in the embryonic and adult nervous system synaptic terminals.

It localises to the synapse. In terms of biological role, plays a significant role in nervous system function, which is subtle at the cellular level but manifests itself in complex behavior. The polypeptide is Synapsin (Syn) (Drosophila melanogaster (Fruit fly)).